The chain runs to 739 residues: Glycine--tRNA ligase (739 aa).

The N-terminal 36 residues, 1-36 (MPSPRPVLLRGARAALLLLLPPRLLARPSLLLRRSL), are a transit peptide targeting the mitochondrion. The residue at position 35 (Ser-35) is a Phosphoserine. The WHEP-TRS domain occupies 63–119 (VLAPLRLAVRQQGDLVRKLKEDKAPQVDVDKAVAELKARKRVLEAKELALQPKDDIV). Lys-204 carries the post-translational modification N6-acetyllysine. Residue Glu-299 coordinates glycine. ATP contacts are provided by residues 331–333 (RNE) and 342–343 (RV). Residue Glu-350 participates in glycine binding. Tyr-453 bears the Phosphotyrosine mark. 457–458 (EI) is a binding site for ATP. At Lys-501 the chain carries N6-acetyllysine. Residue 576–578 (EPS) coordinates glycine. Arg-583 is a binding site for ATP. A Phosphoserine modification is found at Ser-700. At Thr-736 the chain carries Phosphothreonine.

This sequence belongs to the class-II aminoacyl-tRNA synthetase family. In terms of assembly, homodimer. In terms of tissue distribution, widely expressed, including in brain and spinal cord. As to expression, expressed in brain, spinal cord, muscle, heart and spleen. Expressed in brain, spinal cord, muscle, heart, spleen and liver.

The protein localises to the cytoplasm. It localises to the cell projection. The protein resides in the axon. It is found in the secreted. Its subcellular location is the extracellular exosome. The protein localises to the mitochondrion. It carries out the reaction tRNA(Gly) + glycine + ATP = glycyl-tRNA(Gly) + AMP + diphosphate. It catalyses the reaction 2 ATP + H(+) = P(1),P(4)-bis(5'-adenosyl) tetraphosphate + diphosphate. With respect to regulation, ap4A synthesis is inhibited by tRNA, via the disruption of the second ATP-binding site by direct blocking and/or by tRNA-induced conformational change. Functionally, catalyzes the ATP-dependent ligation of glycine to the 3'-end of its cognate tRNA, via the formation of an aminoacyl-adenylate intermediate (Gly-AMP). Also produces diadenosine tetraphosphate (Ap4A), a universal pleiotropic signaling molecule needed for cell regulation pathways, by direct condensation of 2 ATPs. Thereby, may play a special role in Ap4A homeostasis. In Homo sapiens (Human), this protein is Glycine--tRNA ligase.